The chain runs to 1100 residues: cGMP-inhibited 3',5'-cyclic phosphodiesterase 3B (1100 aa).

A compositionally biased stretch (basic and acidic residues) spans 1-11 (MRKDERERDAP). The interval 1–28 (MRKDERERDAPAMRSPPPPPASAASPPE) is interaction with RAPGEF3. Residues 1-29 (MRKDERERDAPAMRSPPPPPASAASPPES) are disordered. Phosphoserine is present on Ser15. Helical transmembrane passes span 69-89 (AGAR…LLGA), 110-130 (LSLS…CFLT), 140-160 (AGSW…FAAW), 170-190 (PAAA…TLAP), 198-218 (VLVL…LGAL), and 225-245 (LLSC…DHFF). Ser273 carries the phosphoserine; by PKB/AKT1 or PKB/AKT2 modification. Phosphoserine is present on residues Ser274 and Ser421. Disordered regions lie at residues 400–423 (RKLH…SSGA) and 570–590 (EPDG…SVFS). Polar residues predominate over residues 408–423 (GRTSFPTPQLRRSSGA). Positions 415-439 (PQLRRSSGASSLLTNEHCSRWDRSS) are interaction with PIK3R6. Positions 573 to 583 (GTDHPSEKSGE) are enriched in basic and acidic residues. The PDEase domain maps to 627–1061 (PNIDQEVSLD…KIWKEIIEEE (435 aa)). Catalysis depends on His713, which acts as the Proton donor. An AMP-binding site is contributed by His713. Residues His717, His797, Asp798, and Asp913 each coordinate Mg(2+). 3 residues coordinate AMP: Asp798, Asp913, and Gln964. Residues 993–1024 (EEGDDTESDDDDDDDDGDGGEELDSDDEETED) show a composition bias toward acidic residues. Residues 993–1033 (EEGDDTESDDDDDDDDGDGGEELDSDDEETEDNLNPKPQRR) are disordered. Residues 1044 to 1079 (MHHLTENHKIWKEIIEEEEEKCKAEGNKLQVDNASL) adopt a coiled-coil conformation.

The protein belongs to the cyclic nucleotide phosphodiesterase family. PDE3 subfamily. In terms of assembly, homodimer. Interacts with PIK3CG; regulates PDE3B activity and thereby cAMP levels in cells. Interacts with RAPGEF3 and PIK3R6; form a signaling complex that regulates phosphatidylinositol 3-kinase gamma in angiogenesis. Interacts with ABHD15; this interaction regulates PDE3B's stability and expression and, thereby, impacts the antilipolytic action of insulin. Mg(2+) serves as cofactor. Requires Mn(2+) as cofactor. Phosphorylation at Ser-273 mediates insulin-induced activation of PDE3B. Abundant in adipose tissues.

Its subcellular location is the membrane. It catalyses the reaction a nucleoside 3',5'-cyclic phosphate + H2O = a nucleoside 5'-phosphate + H(+). The catalysed reaction is 3',5'-cyclic AMP + H2O = AMP + H(+). The enzyme catalyses 3',5'-cyclic GMP + H2O = GMP + H(+). Inhibited by cGMP. Its function is as follows. Cyclic nucleotide phosphodiesterase with a dual-specificity for the second messengers cAMP and cGMP, which are key regulators of many important physiological processes. Regulates angiogenesis by inhibiting the cAMP-dependent guanine nucleotide exchange factor RAPGEF3 and downstream phosphatidylinositol 3-kinase gamma-mediated signaling. Controls cardiac contractility by reducing cAMP concentration in cardiocytes. The protein is cGMP-inhibited 3',5'-cyclic phosphodiesterase 3B of Mus musculus (Mouse).